The following is a 630-amino-acid chain: tRNA uridine 5-carboxymethylaminomethyl modification enzyme MnmG (630 aa).

13-18 (GGGHAG) contributes to the FAD binding site. Residue 273–287 (GPRYCPSIEDKIHRF) coordinates NAD(+).

The protein belongs to the MnmG family. In terms of assembly, homodimer. Heterotetramer of two MnmE and two MnmG subunits. It depends on FAD as a cofactor.

It is found in the cytoplasm. NAD-binding protein involved in the addition of a carboxymethylaminomethyl (cmnm) group at the wobble position (U34) of certain tRNAs, forming tRNA-cmnm(5)s(2)U34. This is tRNA uridine 5-carboxymethylaminomethyl modification enzyme MnmG from Pseudomonas putida (strain W619).